Reading from the N-terminus, the 424-residue chain is UDP-N-acetylglucosamine 1-carboxyvinyltransferase (424 aa).

K22–N23 lines the phosphoenolpyruvate pocket. R98 is a binding site for UDP-N-acetyl-alpha-D-glucosamine. C122 acts as the Proton donor in catalysis. Residue C122 is modified to 2-(S-cysteinyl)pyruvic acid O-phosphothioketal. UDP-N-acetyl-alpha-D-glucosamine is bound by residues R127 to Q131, D312, and I334.

The protein belongs to the EPSP synthase family. MurA subfamily.

Its subcellular location is the cytoplasm. The enzyme catalyses phosphoenolpyruvate + UDP-N-acetyl-alpha-D-glucosamine = UDP-N-acetyl-3-O-(1-carboxyvinyl)-alpha-D-glucosamine + phosphate. Its pathway is cell wall biogenesis; peptidoglycan biosynthesis. Its function is as follows. Cell wall formation. Adds enolpyruvyl to UDP-N-acetylglucosamine. This Xanthomonas euvesicatoria pv. vesicatoria (strain 85-10) (Xanthomonas campestris pv. vesicatoria) protein is UDP-N-acetylglucosamine 1-carboxyvinyltransferase.